The primary structure comprises 260 residues: Adenosylcobinamide-GDP ribazoletransferase (260 aa).

Helical transmembrane passes span 3-23 (APLW…LPAW), 36-56 (FAPW…LVLI), 60-80 (WPTS…SGGL), 108-128 (VGAS…ASLL), 133-153 (LAPL…LWAM), 180-200 (ALPA…LMIV), 206-226 (MVLM…PELL), and 239-259 (GASV…LLPA).

This sequence belongs to the CobS family. Mg(2+) is required as a cofactor.

It localises to the cell inner membrane. It carries out the reaction alpha-ribazole + adenosylcob(III)inamide-GDP = adenosylcob(III)alamin + GMP + H(+). The catalysed reaction is alpha-ribazole 5'-phosphate + adenosylcob(III)inamide-GDP = adenosylcob(III)alamin 5'-phosphate + GMP + H(+). It functions in the pathway cofactor biosynthesis; adenosylcobalamin biosynthesis; adenosylcobalamin from cob(II)yrinate a,c-diamide: step 7/7. Functionally, joins adenosylcobinamide-GDP and alpha-ribazole to generate adenosylcobalamin (Ado-cobalamin). Also synthesizes adenosylcobalamin 5'-phosphate from adenosylcobinamide-GDP and alpha-ribazole 5'-phosphate. The protein is Adenosylcobinamide-GDP ribazoletransferase of Prochlorococcus marinus (strain MIT 9313).